We begin with the raw amino-acid sequence, 481 residues long: Squalene epoxidase erg1 (481 aa).

A helical transmembrane segment spans residues 28–48; that stretch reads HADVVIIGAGVLGCALAVALG. FAD is bound by residues 38-39, 58-59, R66, and R138; these read VL and EA. A glycan (N-linked (GlcNAc...) asparagine) is linked at N146. FAD-binding residues include D319 and M332. The next 2 helical transmembrane spans lie at 425–445 and 452–472; these read KPSV…WVLL and LFPV…VVIF.

Belongs to the squalene monooxygenase family. FAD is required as a cofactor.

The protein localises to the endoplasmic reticulum membrane. It localises to the microsome membrane. It carries out the reaction squalene + reduced [NADPH--hemoprotein reductase] + O2 = (S)-2,3-epoxysqualene + oxidized [NADPH--hemoprotein reductase] + H2O + H(+). It functions in the pathway steroid metabolism; ergosterol biosynthesis. Its function is as follows. Squalene epoxidase; part of the third module of ergosterol biosynthesis pathway that includes the late steps of the pathway. Erg1 catalyzes the epoxidation of squalene into 2,3-epoxysqualene. The third module or late pathway involves the ergosterol synthesis itself through consecutive reactions that mainly occur in the endoplasmic reticulum (ER) membrane. Firstly, the squalene synthase erg9 catalyzes the condensation of 2 farnesyl pyrophosphate moieties to form squalene, which is the precursor of all steroids. Squalene synthase is crucial for balancing the incorporation of farnesyl diphosphate (FPP) into sterol and nonsterol isoprene synthesis. Secondly, squalene is converted into lanosterol by the consecutive action of the squalene epoxidase erg1 and the lanosterol synthase erg7. Then, the delta(24)-sterol C-methyltransferase erg6 methylates lanosterol at C-24 to produce eburicol. Eburicol is the substrate of the sterol 14-alpha demethylase encoded by cyp51A and cyp51B, to yield 4,4,24-trimethyl ergosta-8,14,24(28)-trienol. The C-14 reductase erg24 then reduces the C14=C15 double bond which leads to 4,4-dimethylfecosterol. A sequence of further demethylations at C-4, involving the C-4 demethylation complex containing the C-4 methylsterol oxidases erg25A or erg25B, the sterol-4-alpha-carboxylate 3-dehydrogenase erg26 and the 3-keto-steroid reductase erg27, leads to the production of fecosterol via 4-methylfecosterol. The C-8 sterol isomerase erg2 then catalyzes the reaction which results in unsaturation at C-7 in the B ring of sterols and thus converts fecosterol to episterol. The sterol-C5-desaturase erg3B then catalyzes the introduction of a C-5 double bond in the B ring to produce 5-dehydroepisterol. The 2 other sterol-C5-desaturases, erg3A and erg3C, seem to be less important in ergosterol biosynthesis. The C-22 sterol desaturase erg5 further converts 5-dehydroepisterol into ergosta-5,7,22,24(28)-tetraen-3beta-ol by forming the C-22(23) double bond in the sterol side chain. Finally, ergosta-5,7,22,24(28)-tetraen-3beta-ol is substrate of the C-24(28) sterol reductases erg4A and erg4B to produce ergosterol. Possible alternative sterol biosynthetic pathways might exist from fecosterol to ergosterol, depending on the activities of the erg3 isoforms. The sequence is that of Squalene epoxidase erg1 from Aspergillus fumigatus (strain ATCC MYA-4609 / CBS 101355 / FGSC A1100 / Af293) (Neosartorya fumigata).